We begin with the raw amino-acid sequence, 551 residues long: Hydroxymethylpyrimidine/phosphomethylpyrimidine kinase THI20 (551 aa).

Residue Q64 participates in 4-amino-5-hydroxymethyl-2-methylpyrimidine binding. The Nucleophile role is filled by C468. The active-site Proton donor is the E540.

In the N-terminal section; belongs to the ThiD family. It in the C-terminal section; belongs to the thiaminase-2 family.

The enzyme catalyses 4-amino-5-hydroxymethyl-2-methylpyrimidine + ATP = 4-amino-2-methyl-5-(phosphooxymethyl)pyrimidine + ADP + H(+). It catalyses the reaction 4-amino-2-methyl-5-(phosphooxymethyl)pyrimidine + ATP = 4-amino-2-methyl-5-(diphosphooxymethyl)pyrimidine + ADP. It carries out the reaction thiamine + H2O = 5-(2-hydroxyethyl)-4-methylthiazole + 4-amino-5-hydroxymethyl-2-methylpyrimidine + H(+). It participates in cofactor biosynthesis; thiamine diphosphate biosynthesis; 4-amino-2-methyl-5-diphosphomethylpyrimidine from 5-amino-1-(5-phospho-D-ribosyl)imidazole: step 2/3. The protein operates within cofactor biosynthesis; thiamine diphosphate biosynthesis; 4-amino-2-methyl-5-diphosphomethylpyrimidine from 5-amino-1-(5-phospho-D-ribosyl)imidazole: step 3/3. Its function is as follows. Trifunctional protein with both thiamine biosynthetic and degradative activity. Within the thiamine biosynthesis pathway, catalyzes the phosphorylation of hydroxymethylpyrimidine (HMP) to hydroxymethylpyrimidine phosphate (HMP-P), as well as of HMP-P to HMP-PP. Also has thiaminase II activity and degrades thiamine using water as the nucleophile, resulting only in the formation of HMP (4-amino-2-methyl-5-hydroxymethylpyrimidine) and Thz (4-methyl-5-thiazole ethanol). This is Hydroxymethylpyrimidine/phosphomethylpyrimidine kinase THI20 from Saccharomyces cerevisiae (strain ATCC 204508 / S288c) (Baker's yeast).